The sequence spans 1645 residues: Protein MON2 homolog (1645 aa).

The protein belongs to the MON2 family.

Its function is as follows. May be required for traffic between late Golgi and early endosomes. The protein is Protein MON2 homolog of Caenorhabditis briggsae.